A 127-amino-acid chain; its full sequence is Small ribosomal subunit protein uS12 (127 aa).

A 3-methylthioaspartic acid modification is found at Asp89.

The protein belongs to the universal ribosomal protein uS12 family. As to quaternary structure, part of the 30S ribosomal subunit. Contacts proteins S8 and S17. May interact with IF1 in the 30S initiation complex.

In terms of biological role, with S4 and S5 plays an important role in translational accuracy. Its function is as follows. Interacts with and stabilizes bases of the 16S rRNA that are involved in tRNA selection in the A site and with the mRNA backbone. Located at the interface of the 30S and 50S subunits, it traverses the body of the 30S subunit contacting proteins on the other side and probably holding the rRNA structure together. The combined cluster of proteins S8, S12 and S17 appears to hold together the shoulder and platform of the 30S subunit. This chain is Small ribosomal subunit protein uS12, found in Aliarcobacter butzleri (strain RM4018) (Arcobacter butzleri).